A 240-amino-acid polypeptide reads, in one-letter code: uncharacterized protein (240 aa).

Over residues 1 to 11 the composition is skewed to basic residues; the sequence is MGMTPRRKRRG. The interval 1-32 is disordered; sequence MGMTPRRKRRGGAVQITRPTGRPRTPTTQTTK. Over residues 17–31 the composition is skewed to low complexity; the sequence is TRPTGRPRTPTTQTT. The next 6 helical transmembrane spans lie at 36–56, 93–113, 115–135, 146–166, 172–192, and 198–218; these read WVVG…VELI, LMAN…AGLS, FVWA…LIGN, IGAS…GLFV, IVIG…AMPV, and GVSW…AYLL.

This sequence to M.leprae ML1171.

It localises to the cell membrane. This is an uncharacterized protein from Mycobacterium tuberculosis (strain CDC 1551 / Oshkosh).